Here is a 242-residue protein sequence, read N- to C-terminus: MAGHSKWANIQHRKGRQDEKRGKIWTRLIKEITVAARMGGGDIAANPRLRLAVDKAADANMPKDNVTRAIQRGSGGLEGVNYEEIRYEGYGINGAAILVDCMTDNRVRTVAEVRHAFSKFGGNMGTEGSVAFLFKHCGQFFFAPGTDEDKLMEAALEAGAEDVTTDEEGGIEVICPPHDFSAVKDALAAAGFKAELAEVVMKPATETVFEGDDAVKMQKLLDALENLDDVQEVFTNAVIEQA.

It belongs to the TACO1 family.

It localises to the cytoplasm. This is Probable transcriptional regulatory protein HEAR0561 from Herminiimonas arsenicoxydans.